Reading from the N-terminus, the 176-residue chain is Nucleoside triphosphate/diphosphate phosphatase (176 aa).

The Proton donor role is filled by R23. Mg(2+) contacts are provided by N87, D103, D105, D107, D120, and E123.

It belongs to the Ntdp family. The cofactor is Mg(2+).

The enzyme catalyses a ribonucleoside 5'-triphosphate + H2O = a ribonucleoside 5'-diphosphate + phosphate + H(+). The catalysed reaction is a ribonucleoside 5'-diphosphate + H2O = a ribonucleoside 5'-phosphate + phosphate + H(+). Has nucleoside phosphatase activity towards nucleoside triphosphates and nucleoside diphosphates. This Bacillus pumilus (strain SAFR-032) protein is Nucleoside triphosphate/diphosphate phosphatase.